A 237-amino-acid chain; its full sequence is Phosphoribosylaminoimidazole-succinocarboxamide synthase (237 aa).

This sequence belongs to the SAICAR synthetase family.

It carries out the reaction 5-amino-1-(5-phospho-D-ribosyl)imidazole-4-carboxylate + L-aspartate + ATP = (2S)-2-[5-amino-1-(5-phospho-beta-D-ribosyl)imidazole-4-carboxamido]succinate + ADP + phosphate + 2 H(+). Its pathway is purine metabolism; IMP biosynthesis via de novo pathway; 5-amino-1-(5-phospho-D-ribosyl)imidazole-4-carboxamide from 5-amino-1-(5-phospho-D-ribosyl)imidazole-4-carboxylate: step 1/2. This Pseudomonas fluorescens (strain Pf0-1) protein is Phosphoribosylaminoimidazole-succinocarboxamide synthase.